The primary structure comprises 400 residues: MASKQLWRWHGITGDGNAQDGMLWAESRTLLLMALQQQMVTPLSLKRIAINSAQWRGDKSAEVIHQLATLLKAGLTLSEGLALLAEQHPSKQWQALLQSLAHDLEQGIAFSNALLPWSEVFPPLYQAMIRTGELTGKLDECCFELARQQKAQRQLTDKVKSALRYPIIILAMAIMVVVAMLHFVLPEFAAIYKTFNTPLPALTQGIMTLADFSGEWSWLLVLFGFLLAIANKLLMRRPTWLIVRQKLLLRIPIMGSLMRGQKLTQIFTILALTQSAGITFLQGVESVRETMRCPYWVQLLTQIQHDISNGQPIWLALKNTGEFSPLCLQLVRTGEASGSLDLMLDNLAHHHRENTMALADNLAALLEPALLIITGGIIGTLVVAMYLPIFHLGDAMSGMG.

3 helical membrane passes run 165–185 (YPII…HFVL), 209–229 (LADF…LLAI), and 370–390 (LLII…LPIF).

This sequence belongs to the GSP F family.

The protein resides in the cell inner membrane. The polypeptide is Protein transport protein HofC homolog (hofC) (Escherichia coli (strain K12)).